The sequence spans 361 residues: Gibberellin 20 oxidase 1-D (361 aa).

One can recognise a Fe2OG dioxygenase domain in the interval 199-299; that stretch reads GNDSIMRLNY…RKSLAFFLCP (101 aa). Residues histidine 224, aspartate 226, and histidine 280 each contribute to the Fe cation site. The active site involves arginine 290.

Belongs to the iron/ascorbate-dependent oxidoreductase family. GA20OX subfamily. It depends on Fe cation as a cofactor. Requires L-ascorbate as cofactor. Expressed in nodes and the ear of the elongating stem.

The enzyme catalyses gibberellin A12 + 2 2-oxoglutarate + 3 O2 + H(+) = gibberellin A9 + 2 succinate + 3 CO2 + 2 H2O. The catalysed reaction is gibberellin A53 + 2 2-oxoglutarate + 3 O2 + H(+) = gibberellin A20 + 2 succinate + 3 CO2 + 2 H2O. Key oxidase enzyme in the biosynthesis of gibberellin that catalyzes the conversion of GA12 and GA53 to GA9 and GA20 respectively, via a three-step oxidation at C-20 of the GA skeleton. The polypeptide is Gibberellin 20 oxidase 1-D (GA20ox1D) (Triticum aestivum (Wheat)).